Here is a 214-residue protein sequence, read N- to C-terminus: MAGENFATPFHGHVGRGAFSDVYEPAEDTFLLLDALEAAAAELAGVEICLEVGSGSGVVSAFLASMIGPQALYMCTDINPEAAACTLETARCNKVHIQPVITDLVKGLLPRLTEKVDLLVFNPPYVVTPPQEVGSHGIEAAWAGGRNGREVMDRFFPLVPDLLSPRGLFYLVTIKENNPEEILKIMKTKGLQGTTALSRQAGQETLSVLKFTKS.

The S-adenosyl-L-homocysteine site is built by threonine 29, glutamate 51, glycine 53, aspartate 77, aspartate 103, leucine 104, and asparagine 122. S-adenosyl-L-methionine is bound by residues threonine 29, glutamate 51, glycine 53, aspartate 77, aspartate 103, leucine 104, and asparagine 122. Residue asparagine 122 coordinates a protein.

Belongs to the eukaryotic/archaeal PrmC-related family. As to quaternary structure, heterodimer; heterodimerization with TRMT112 is required for S-adenosyl-L-methionine-binding. Does not interact with TRMT112. Ubiquitinated, leading to its degradation by the proteasome. In terms of tissue distribution, widely expressed, with highest expression in parathyroid and pituitary glands, followed by adrenal gland and kidney, and lowest expression in leukocytes and mammary gland.

The protein localises to the nucleus. The catalysed reaction is L-lysyl-[histone] + S-adenosyl-L-methionine = N(6)-methyl-L-lysyl-[histone] + S-adenosyl-L-homocysteine + H(+). The enzyme catalyses L-glutaminyl-[protein] + S-adenosyl-L-methionine = N(5)-methyl-L-glutaminyl-[protein] + S-adenosyl-L-homocysteine + H(+). It catalyses the reaction methylarsonous acid + S-adenosyl-L-methionine = dimethylarsinate + S-adenosyl-L-homocysteine + 2 H(+). Its function is as follows. Methyltransferase that can methylate proteins and, to a lower extent, arsenic. Catalytic subunit of a heterodimer with TRMT112, which monomethylates 'Lys-12' of histone H4 (H4K12me1), a modification present at the promoters of numerous genes encoding cell cycle regulators. Catalytic subunit of a heterodimer with TRMT112, which catalyzes N5-methylation of Glu residue of proteins with a Gly-Gln-Xaa-Xaa-Xaa-Arg motif. Methylates ETF1 on 'Gln-185'; ETF1 needs to be complexed to ERF3 in its GTP-bound form to be efficiently methylated. May also play a role in the modulation of arsenic-induced toxicity by mediating the conversion of monomethylarsonous acid (3+) into the less toxic dimethylarsonic acid. It however only plays a limited role in arsenic metabolism compared with AS3MT. The polypeptide is Methyltransferase HEMK2 (Homo sapiens (Human)).